A 152-amino-acid polypeptide reads, in one-letter code: MADVEPEVAAAGVPKKRTFKKFAFKGVDLDALLDMSTDDLVKLFSSRIRRRFSRGLTRKPMALIKKLRKAKREAPQGEKPEPVRTHLRNMIIVPEMIGSIIGVYNGKTFNQVEIKPEMIGHYLAEFSISYKPVKHGRPGVGATHSSRFIPLK.

Belongs to the universal ribosomal protein uS19 family.

It localises to the cytoplasm. The sequence is that of Small ribosomal subunit protein uS19u (RPS15A) from Arabidopsis thaliana (Mouse-ear cress).